Consider the following 278-residue polypeptide: Poly(3-hydroxyoctanoate) depolymerase (278 aa).

Residues Met-1–Leu-33 form the signal peptide.

The protein localises to the secreted. It catalyses the reaction Hydrolyzes the polyester poly{oxycarbonyl[(R)-2-pentylethylene]} to oligomers.. In terms of biological role, hydrolysis of poly(3-hydroxyoctanoic acid). This chain is Poly(3-hydroxyoctanoate) depolymerase (phaZ), found in Pseudomonas fluorescens.